Here is a 432-residue protein sequence, read N- to C-terminus: Histidinol dehydrogenase (432 aa).

Tyr-133, Gln-194, and Asn-217 together coordinate NAD(+). Substrate contacts are provided by Ser-240, Gln-262, and His-265. Residues Gln-262 and His-265 each coordinate Zn(2+). Active-site proton acceptor residues include Glu-330 and His-331. Substrate is bound by residues His-331, Asp-364, Glu-418, and His-423. Zn(2+) is bound at residue Asp-364. His-423 contributes to the Zn(2+) binding site.

The protein belongs to the histidinol dehydrogenase family. Zn(2+) serves as cofactor.

The enzyme catalyses L-histidinol + 2 NAD(+) + H2O = L-histidine + 2 NADH + 3 H(+). Its pathway is amino-acid biosynthesis; L-histidine biosynthesis; L-histidine from 5-phospho-alpha-D-ribose 1-diphosphate: step 9/9. Functionally, catalyzes the sequential NAD-dependent oxidations of L-histidinol to L-histidinaldehyde and then to L-histidine. This Nitrosomonas europaea (strain ATCC 19718 / CIP 103999 / KCTC 2705 / NBRC 14298) protein is Histidinol dehydrogenase.